Consider the following 549-residue polypeptide: Cytoplasmic trehalase (549 aa).

Substrate-binding positions include Arg168, 175-176 (WD), Asn212, 221-223 (RSQ), 292-294 (RDE), and Gly324. Active-site proton donor/acceptor residues include Asp326 and Glu509. Glu525 is a binding site for substrate.

The protein belongs to the glycosyl hydrolase 37 family. In terms of assembly, monomer.

It localises to the cytoplasm. It carries out the reaction alpha,alpha-trehalose + H2O = alpha-D-glucose + beta-D-glucose. It functions in the pathway glycan degradation; trehalose degradation; D-glucose from alpha,alpha-trehalose: step 1/1. Its function is as follows. Hydrolyzes trehalose to glucose. Could be involved, in cells returning to low osmolarity conditions, in the utilization of the accumulated cytoplasmic trehalose, which was synthesized in response to high osmolarity. The chain is Cytoplasmic trehalase from Escherichia coli O139:H28 (strain E24377A / ETEC).